The primary structure comprises 299 residues: ATP phosphoribosyltransferase (299 aa).

The protein belongs to the ATP phosphoribosyltransferase family. Long subfamily. It depends on Mg(2+) as a cofactor.

Its subcellular location is the cytoplasm. The catalysed reaction is 1-(5-phospho-beta-D-ribosyl)-ATP + diphosphate = 5-phospho-alpha-D-ribose 1-diphosphate + ATP. Its pathway is amino-acid biosynthesis; L-histidine biosynthesis; L-histidine from 5-phospho-alpha-D-ribose 1-diphosphate: step 1/9. Feedback inhibited by histidine. Functionally, catalyzes the condensation of ATP and 5-phosphoribose 1-diphosphate to form N'-(5'-phosphoribosyl)-ATP (PR-ATP). Has a crucial role in the pathway because the rate of histidine biosynthesis seems to be controlled primarily by regulation of HisG enzymatic activity. This chain is ATP phosphoribosyltransferase, found in Mannheimia succiniciproducens (strain KCTC 0769BP / MBEL55E).